Consider the following 263-residue polypeptide: MANLTEKFLRIFARRGKSIILAYDHGIEHGPADFMDNPDSADPEYILRLARDAGFDGVVFQRGIAEKYYDGSVPLILKLNGKTTLYNGEPVSVANCSVEEAVSLGASAVGYTIYPGSGFEWKMFEELARIKRDAVKFDLPLVVWSYPRGGKVVNETAPEIVAYAARIALELGADAMKIKYTGDPKTFSWAVKVAGKVPVLMSGGPKTKTEEDFLKQVEGVLEAGALGIAVGRNVWQRRDALKFARALAELVYGGKKLAEPLNV.

Residues 24–25, His29, Asp33, and Trp144 contribute to the substrate site; that span reads DH. Tyr146 serves as the catalytic Proton donor. Residues Arg148, 177-179, 202-204, and 231-232 contribute to the substrate site; these read KIK, SGG, and GR. Lys177 acts as the Schiff-base intermediate with dihydroxyacetone-P in catalysis.

This sequence belongs to the DeoC/FbaB aldolase family. As to quaternary structure, homodecamer (dimer of pentamers).

It is found in the cytoplasm. The enzyme catalyses beta-D-fructose 1,6-bisphosphate = D-glyceraldehyde 3-phosphate + dihydroxyacetone phosphate. Its activity is regulated as follows. Activated by citrate. Catalyzes the reversible cleavage of fructose 1,6-bisphosphate (FBP) to glyceraldehyde 3-phosphate (GAP) and dihydroxyacetone phosphate (DHAP). This is Fructose-bisphosphate aldolase class 1 (fba) from Thermoproteus tenax (strain ATCC 35583 / DSM 2078 / JCM 9277 / NBRC 100435 / Kra 1).